The sequence spans 267 residues: RWD domain-containing protein 3 (267 aa).

Residues 7–114 (QELSALAAIF…LWIQQNLRLV (108 aa)) enclose the RWD domain. 2 interaction with UBE2I/UBC9 regions span residues 13–15 (AAI) and 100–102 (VHE).

As to quaternary structure, interacts with UBE2I/UBC9, NFKBIA, HIF1A and NCOA2.

It localises to the nucleus. The protein resides in the cytoplasm. Functionally, enhancer of SUMO conjugation. Via its interaction with UBE2I/UBC9, increases SUMO conjugation to proteins by promoting the binding of E1 and E2 enzymes, thioester linkage between SUMO and UBE2I/UBC9 and transfer of SUMO to specific target proteins which include HIF1A, PIAS, NFKBIA, NR3C1 and TOP1. Positively regulates the NF-kappa-B signaling pathway by enhancing the sumoylation of NF-kappa-B inhibitor alpha (NFKBIA), promoting its stabilization which consequently leads to an increased inhibition of NF-kappa-B transcriptional activity. Negatively regulates the hypoxia-inducible factor-1 alpha (HIF1A) signaling pathway by increasing the sumoylation of HIF1A, promoting its stabilization, transcriptional activity and the expression of its target gene VEGFA during hypoxia. Has no effect on ubiquitination. In Mus musculus (Mouse), this protein is RWD domain-containing protein 3 (Rwdd3).